The primary structure comprises 494 residues: Catalase A (494 aa).

Over residues 1–23 (MTDRPTITTTAGAPVPDNQNSLT) the composition is skewed to polar residues. The interval 1–25 (MTDRPTITTTAGAPVPDNQNSLTAG) is disordered. Catalysis depends on residues His55 and Asn127. Tyr337 contacts heme.

The protein belongs to the catalase family. Heme serves as cofactor.

Its subcellular location is the periplasm. It catalyses the reaction 2 H2O2 = O2 + 2 H2O. Decomposes hydrogen peroxide into water and oxygen; serves to protect cells from the toxic effects of hydrogen peroxide. This Rhizobium meliloti (strain 1021) (Ensifer meliloti) protein is Catalase A (katA).